The chain runs to 443 residues: 3-phosphoshikimate 1-carboxyvinyltransferase (443 aa).

A disordered region spans residues 1–22 (MSHASRPTPLEARGSTPLTGRV). Residues Lys28, Ser29, and Arg33 each coordinate 3-phosphoshikimate. Residue Lys28 participates in phosphoenolpyruvate binding. Phosphoenolpyruvate-binding residues include Gly101 and Arg129. 3-phosphoshikimate contacts are provided by Ser174, Gln176, Asp326, and Lys353. Gln176 is a phosphoenolpyruvate binding site. Asp326 (proton acceptor) is an active-site residue. Arg357 and Arg400 together coordinate phosphoenolpyruvate.

This sequence belongs to the EPSP synthase family. Monomer.

Its subcellular location is the cytoplasm. The enzyme catalyses 3-phosphoshikimate + phosphoenolpyruvate = 5-O-(1-carboxyvinyl)-3-phosphoshikimate + phosphate. The protein operates within metabolic intermediate biosynthesis; chorismate biosynthesis; chorismate from D-erythrose 4-phosphate and phosphoenolpyruvate: step 6/7. Functionally, catalyzes the transfer of the enolpyruvyl moiety of phosphoenolpyruvate (PEP) to the 5-hydroxyl of shikimate-3-phosphate (S3P) to produce enolpyruvyl shikimate-3-phosphate and inorganic phosphate. The sequence is that of 3-phosphoshikimate 1-carboxyvinyltransferase from Afipia carboxidovorans (strain ATCC 49405 / DSM 1227 / KCTC 32145 / OM5) (Oligotropha carboxidovorans).